The primary structure comprises 216 residues: Maintenance of carboxysome distribution protein A (216 aa).

ATP contacts are provided by G18, G19, G21, K22, T23, T24, and Q47. Position 23 (T23) interacts with Mg(2+).

Belongs to the ParA family. McdA subfamily. In terms of assembly, homodimerizes in the presence of ATP. Each subunit binds 1 ATP molecule; some residues cross the dimer interface to contact ATP in the other subunit. Forms a complex with McdB.

Its subcellular location is the cytoplasm. It localises to the nucleoid. It carries out the reaction ATP + H2O = ADP + phosphate + H(+). Its function is as follows. McdA and McdB together mediate carboxysome (Cb) spacing, size, ultrastructure and probably inheritance in the cell, together they prevent Cb aggregation. McdA is an ATPase that forms dynamic gradients on the nucleoid in response to adapter protein McdB, which associates with carboxysomes. The interplay between McdA gradients on the nucleoid and McdB-bound carboxysomes result in the equal spacing of Cbs along the cell length. Incorrect positioning (aggregation) of carboxysomes results in reduced CO(2) fixation by encapsulated ribulose-1,5-bisphosphate carboxylase (RuBisCO, cbbL/cbbS), which leads to slower growth. This Gloeobacter kilaueensis (strain ATCC BAA-2537 / CCAP 1431/1 / ULC 316 / JS1) protein is Maintenance of carboxysome distribution protein A.